The following is a 318-amino-acid chain: NADH-ubiquinone oxidoreductase chain 1 (318 aa).

A run of 8 helical transmembrane segments spans residues 2–22 (FMVN…FLTL), 71–91 (YIIA…PLPI), 98–118 (INLG…SILW), 146–166 (LAII…STLI), 171–191 (HTWL…STLA), 222–242 (LFFM…ATIF), 253–273 (EFFS…FLWV), and 294–314 (LPLT…LANI).

This sequence belongs to the complex I subunit 1 family.

Its subcellular location is the mitochondrion inner membrane. It carries out the reaction a ubiquinone + NADH + 5 H(+)(in) = a ubiquinol + NAD(+) + 4 H(+)(out). In terms of biological role, core subunit of the mitochondrial membrane respiratory chain NADH dehydrogenase (Complex I) that is believed to belong to the minimal assembly required for catalysis. Complex I functions in the transfer of electrons from NADH to the respiratory chain. The immediate electron acceptor for the enzyme is believed to be ubiquinone. This is NADH-ubiquinone oxidoreductase chain 1 (MT-ND1) from Nycticebus coucang (Slow loris).